The chain runs to 381 residues: Spermidine/putrescine import ATP-binding protein PotA (381 aa).

In terms of domain architecture, ABC transporter spans 22–252 (VELRNVFKFF…PKTSFVADFI (231 aa)). 54–61 (GPSGCGKT) contacts ATP.

Belongs to the ABC transporter superfamily. Spermidine/putrescine importer (TC 3.A.1.11.1) family. In terms of assembly, the complex is composed of two ATP-binding proteins (PotA), two transmembrane proteins (PotB and PotC) and a solute-binding protein (PotD).

The protein resides in the cell inner membrane. The catalysed reaction is ATP + H2O + polyamine-[polyamine-binding protein]Side 1 = ADP + phosphate + polyamineSide 2 + [polyamine-binding protein]Side 1.. Its function is as follows. Part of the ABC transporter complex PotABCD involved in spermidine/putrescine import. Responsible for energy coupling to the transport system. The polypeptide is Spermidine/putrescine import ATP-binding protein PotA (Trichormus variabilis (strain ATCC 29413 / PCC 7937) (Anabaena variabilis)).